A 298-amino-acid polypeptide reads, in one-letter code: Cell wall protein DAN1 (298 aa).

Positions 1-19 (MSRISILAVAAALVASATA) are cleaved as a signal peptide. The segment at 122–168 (PASTTEASSTSTSEASSAATESSSSSESSAETSSNAASTQATVSSES) is disordered. N275 is lipidated: GPI-anchor amidated asparagine. Positions 276 to 298 (GANKFNNGVFGAAAIAGAAALLL) are cleaved as a propeptide — removed in mature form.

This sequence belongs to the SRP1/TIP1 family. Extensively O-glycosylated. In terms of processing, the GPI-anchor is attached to the protein in the endoplasmic reticulum and serves to target the protein to the cell surface. There, the glucosamine-inositol phospholipid moiety is cleaved off and the GPI-modified mannoprotein is covalently attached via its lipidless GPI glycan remnant to the 1,6-beta-glucan of the outer cell wall layer.

The protein localises to the secreted. It is found in the cell wall. The protein resides in the membrane. Component of the cell wall. This chain is Cell wall protein DAN1 (DAN1), found in Saccharomyces cerevisiae (strain ATCC 204508 / S288c) (Baker's yeast).